The sequence spans 160 residues: Cytochrome b6-f complex subunit 4 (160 aa).

The next 3 helical transmembrane spans lie at 36 to 56, 95 to 115, and 131 to 151; these read LLYI…GLAV, LLGV…PFLE, and TVFL…TLPI.

This sequence belongs to the cytochrome b family. PetD subfamily. In terms of assembly, the 4 large subunits of the cytochrome b6-f complex are cytochrome b6, subunit IV (17 kDa polypeptide, petD), cytochrome f and the Rieske protein, while the 4 small subunits are petG, petL, petM and petN. The complex functions as a dimer.

The protein localises to the plastid. It localises to the chloroplast thylakoid membrane. Functionally, component of the cytochrome b6-f complex, which mediates electron transfer between photosystem II (PSII) and photosystem I (PSI), cyclic electron flow around PSI, and state transitions. This Coffea arabica (Arabian coffee) protein is Cytochrome b6-f complex subunit 4.